The primary structure comprises 289 residues: Diaminopimelate epimerase (289 aa).

Substrate contacts are provided by asparagine 13, glutamine 47, and asparagine 67. The Proton donor role is filled by cysteine 76. Residues 77 to 78, asparagine 167, asparagine 200, and 218 to 219 contribute to the substrate site; these read GN and ER. Residue cysteine 227 is the Proton acceptor of the active site. 228–229 is a binding site for substrate; that stretch reads GT.

It belongs to the diaminopimelate epimerase family. Homodimer.

Its subcellular location is the cytoplasm. The catalysed reaction is (2S,6S)-2,6-diaminopimelate = meso-2,6-diaminopimelate. It functions in the pathway amino-acid biosynthesis; L-lysine biosynthesis via DAP pathway; DL-2,6-diaminopimelate from LL-2,6-diaminopimelate: step 1/1. In terms of biological role, catalyzes the stereoinversion of LL-2,6-diaminopimelate (L,L-DAP) to meso-diaminopimelate (meso-DAP), a precursor of L-lysine and an essential component of the bacterial peptidoglycan. The chain is Diaminopimelate epimerase from Burkholderia thailandensis (strain ATCC 700388 / DSM 13276 / CCUG 48851 / CIP 106301 / E264).